Here is a 692-residue protein sequence, read N- to C-terminus: MGREFSLENTRNIGIMAHIDAGKTTATERILYYTGRIHKIGETHEGASQMDWMEQEQERGITITSAATTAQWKGHRVNIIDTPGHVDFTVEVERSLRVLDGAVAVLDAQSGVEPQTETVWRQATTYGVPRIVFVNKMDKIGADFLYSVGTIHDRLQANAHPIQLPIGAEDEFNGIIDLVEECAYMYGNDLGTDIQRVEIPEEHKELAEEYRGKLIEAVAELDEEMMMKYLEGEEITVEELKAGIRKATTSVEFFPVICGSAFKNKGVQILLDAVIDYLPSPLDVPAIKGIVPDTDEEVERKSSDEEPFSALAFKIMTDPYVGKLTFFRVYSGVLNSGSYVKNSTKGKRERVGRILQMHANSREEISTVYAGDIAAAVGLKDTTTGDTLCDEKSLVILESMEFPEPVISVAIEPKSKADQDKMGTALAKLSEEDPTFRAHTDQETGQTIIAGMGELHLDIIVDRMRREFKVEANVGAPQVAYRETFRSAAKVEGKFARQSGGRGQFGHVWIEFEPNEEGKGFEFENKIVGGVVPREYIPAVGAGLEDALKNGVLAGYPVVDIKAALVDGSYHDVDSSEMAFKIAASMALKAAVSKCNPVILEPMMKVEVVIPEEYMGDIMGDVTSRRGRVEGMEARGNAQVVRAMVPLSEMFGYATSLRSNTQGRGTFSMVFDHYEEVPKSVSEEIIKKNKGE.

Positions 8-282 (ENTRNIGIMA…AVIDYLPSPL (275 aa)) constitute a tr-type G domain. GTP contacts are provided by residues 17–24 (AHIDAGKT), 81–85 (DTPGH), and 135–138 (NKMD).

The protein belongs to the TRAFAC class translation factor GTPase superfamily. Classic translation factor GTPase family. EF-G/EF-2 subfamily.

It is found in the cytoplasm. Functionally, catalyzes the GTP-dependent ribosomal translocation step during translation elongation. During this step, the ribosome changes from the pre-translocational (PRE) to the post-translocational (POST) state as the newly formed A-site-bound peptidyl-tRNA and P-site-bound deacylated tRNA move to the P and E sites, respectively. Catalyzes the coordinated movement of the two tRNA molecules, the mRNA and conformational changes in the ribosome. This chain is Elongation factor G, found in Bacillus cereus (strain ATCC 10987 / NRS 248).